Here is a 393-residue protein sequence, read N- to C-terminus: NAD(P)H-quinone oxidoreductase subunit H, chloroplastic (393 aa).

The protein belongs to the complex I 49 kDa subunit family. In terms of assembly, NDH is composed of at least 16 different subunits, 5 of which are encoded in the nucleus.

It is found in the plastid. Its subcellular location is the chloroplast thylakoid membrane. It carries out the reaction a plastoquinone + NADH + (n+1) H(+)(in) = a plastoquinol + NAD(+) + n H(+)(out). The catalysed reaction is a plastoquinone + NADPH + (n+1) H(+)(in) = a plastoquinol + NADP(+) + n H(+)(out). Its function is as follows. NDH shuttles electrons from NAD(P)H:plastoquinone, via FMN and iron-sulfur (Fe-S) centers, to quinones in the photosynthetic chain and possibly in a chloroplast respiratory chain. The immediate electron acceptor for the enzyme in this species is believed to be plastoquinone. Couples the redox reaction to proton translocation, and thus conserves the redox energy in a proton gradient. The chain is NAD(P)H-quinone oxidoreductase subunit H, chloroplastic from Drimys granadensis.